Here is a 484-residue protein sequence, read N- to C-terminus: Chromosomal replication initiator protein DnaA (484 aa).

Residues 1 to 73 (MQEGKNIWSL…EILIEKGHNT (73 aa)) are domain I, interacts with DnaA modulators. Positions 73–140 (TINVEFINSP…EEIHTKYRNP (68 aa)) are domain II. Residues 141-357 (FLKKKYTFEN…AAVTKLKAHI (217 aa)) are domain III, AAA+ region. Residues Gly-185, Gly-187, Lys-188, and Thr-189 each contribute to the ATP site. Residues 358–484 (DLEDIEIDTS…IELMNKINKK (127 aa)) form a domain IV, binds dsDNA region.

This sequence belongs to the DnaA family. In terms of assembly, oligomerizes as a right-handed, spiral filament on DNA at oriC.

The protein localises to the cytoplasm. In terms of biological role, plays an essential role in the initiation and regulation of chromosomal replication. ATP-DnaA binds to the origin of replication (oriC) to initiate formation of the DNA replication initiation complex once per cell cycle. Binds the DnaA box (a 9 base pair repeat at the origin) and separates the double-stranded (ds)DNA. Forms a right-handed helical filament on oriC DNA; dsDNA binds to the exterior of the filament while single-stranded (ss)DNA is stabiized in the filament's interior. The ATP-DnaA-oriC complex binds and stabilizes one strand of the AT-rich DNA unwinding element (DUE), permitting loading of DNA polymerase. After initiation quickly degrades to an ADP-DnaA complex that is not apt for DNA replication. Binds acidic phospholipids. The protein is Chromosomal replication initiator protein DnaA of Borrelia hermsii (strain HS1 / DAH).